We begin with the raw amino-acid sequence, 144 residues long: Large ribosomal subunit protein uL15 (144 aa).

The segment at 1–57 is disordered; the sequence is MLLNTLSPAAGSKHAPKRLGRGVGSGLGKTGGRGHKGQKSRSGGKVRPGFEGGQMPL. The segment covering 21 to 31 has biased composition (gly residues); that stretch reads RGVGSGLGKTG. Residues 32-44 are compositionally biased toward basic residues; it reads GRGHKGQKSRSGG.

The protein belongs to the universal ribosomal protein uL15 family. In terms of assembly, part of the 50S ribosomal subunit.

In terms of biological role, binds to the 23S rRNA. The protein is Large ribosomal subunit protein uL15 of Vibrio cholerae serotype O1 (strain ATCC 39541 / Classical Ogawa 395 / O395).